The sequence spans 148 residues: Ubiquitin-like protein 4A (148 aa).

In terms of domain architecture, Ubiquitin-like spans 1–76 (MQLTVKALKG…LNLMVKEQVA (76 aa)).

As to quaternary structure, component of the bag6/bat3 complex.

The protein localises to the cytoplasm. It localises to the cytosol. The protein resides in the nucleus. As part of a cytosolic protein quality control complex, the bag6/bat3 complex, maintains misfolded and hydrophobic patches-containing proteins in a soluble state and participates in their proper delivery to the endoplasmic reticulum or alternatively can promote their sorting to the proteasome where they undergo degradation. The bag6/bat3 complex is involved in the post-translational delivery of tail-anchored/type II transmembrane proteins to the endoplasmic reticulum membrane. Similarly, the bag6/bat3 complex also functions as a sorting platform for proteins of the secretory pathway that are mislocalized to the cytosol either delivering them to the proteasome for degradation or to the endoplasmic reticulum. The bag6/bat3 complex also plays a role in the endoplasmic reticulum-associated degradation (ERAD), a quality control mechanism that eliminates unwanted proteins of the endoplasmic reticulum through their retrotranslocation to the cytosol and their targeting to the proteasome. It maintains these retrotranslocated proteins in an unfolded yet soluble state condition in the cytosol to ensure their proper delivery to the proteasome. The polypeptide is Ubiquitin-like protein 4A (ubl4a) (Xenopus tropicalis (Western clawed frog)).